We begin with the raw amino-acid sequence, 290 residues long: D-tagatose-1,6-bisphosphate aldolase subunit KbaY (290 aa).

The active-site Proton donor is Asp-82. 2 residues coordinate Zn(2+): His-83 and His-180. Gly-181 contributes to the dihydroxyacetone phosphate binding site. His-208 serves as a coordination point for Zn(2+). Dihydroxyacetone phosphate contacts are provided by residues 209–211 (GAS) and 230–233 (NVAT).

Belongs to the class II fructose-bisphosphate aldolase family. TagBP aldolase KbaY subfamily. In terms of assembly, homotetramer. Forms a complex with KbaZ. Zn(2+) is required as a cofactor.

The enzyme catalyses D-tagatofuranose 1,6-bisphosphate = D-glyceraldehyde 3-phosphate + dihydroxyacetone phosphate. It participates in carbohydrate metabolism; D-tagatose 6-phosphate degradation; D-glyceraldehyde 3-phosphate and glycerone phosphate from D-tagatose 6-phosphate: step 2/2. Catalytic subunit of the tagatose-1,6-bisphosphate aldolase KbaYZ, which catalyzes the reversible aldol condensation of dihydroxyacetone phosphate (DHAP or glycerone-phosphate) with glyceraldehyde 3-phosphate (G3P) to produce tagatose 1,6-bisphosphate (TBP). Requires KbaZ subunit for full activity and stability. This chain is D-tagatose-1,6-bisphosphate aldolase subunit KbaY, found in Salmonella arizonae (strain ATCC BAA-731 / CDC346-86 / RSK2980).